A 455-amino-acid chain; its full sequence is tRNA modification GTPase MnmE (455 aa).

Arg22, Glu85, and Arg124 together coordinate (6S)-5-formyl-5,6,7,8-tetrahydrofolate. Residues 220 to 377 form the TrmE-type G domain; that stretch reads GIYTVIVGRP…VEKAIKEAIL (158 aa). Asn230 lines the K(+) pocket. Residues 230–235, 249–255, and 274–277 each bind GTP; these read NVGKSS, TDIPGTT, and DTAG. Ser234 lines the Mg(2+) pocket. K(+) is bound by residues Thr249, Ile251, and Thr254. Thr255 is a Mg(2+) binding site. Residue Lys455 coordinates (6S)-5-formyl-5,6,7,8-tetrahydrofolate.

Belongs to the TRAFAC class TrmE-Era-EngA-EngB-Septin-like GTPase superfamily. TrmE GTPase family. In terms of assembly, homodimer. Heterotetramer of two MnmE and two MnmG subunits. Requires K(+) as cofactor.

Its subcellular location is the cytoplasm. Its function is as follows. Exhibits a very high intrinsic GTPase hydrolysis rate. Involved in the addition of a carboxymethylaminomethyl (cmnm) group at the wobble position (U34) of certain tRNAs, forming tRNA-cmnm(5)s(2)U34. The chain is tRNA modification GTPase MnmE from Caldicellulosiruptor saccharolyticus (strain ATCC 43494 / DSM 8903 / Tp8T 6331).